A 423-amino-acid polypeptide reads, in one-letter code: Zinc finger protein Gfi-1 (423 aa).

The interval 1-20 is SNAG domain; sequence MPRSFLVKSKKAHSYHQPRS. The segment at 1–102 is disordered; it reads MPRSFLVKSK…PPSPSVSPAS (102 aa). 2 positions are modified to phosphoserine: S20 and S57. Basic and acidic residues predominate over residues 48 to 57; sequence SKMEPRERLS. Positions 141-258 are required for interaction with RELA; the sequence is RQCSALERSA…LLLGGGSYKC (118 aa). 6 C2H2-type zinc fingers span residues 256–279, 285–307, 313–335, 341–363, 369–391, and 397–420; these read YKCI…RRSH, FACE…KAVH, FDCK…LLIH, YPCQ…TFIH, HKCQ…SRKH, and FGCD…ETQH.

Interacts with U2AF1L4. Component of RCOR-GFI-KDM1A-HDAC complexes. Interacts directly with RCOR1, KDM1A and HDAC2. Also interacts with HDAC1. regions. Interacts (via the zinc-finger domain) with ARIH2; the interaction prevents GFI1 ubiquitination and proteasomal degradation. Interacts with PIAS3; the interaction relieves the inhibitory effect of PIAS3 on STAT3-mediated transcriptional activity. Forms a complex with EHMT2 and HDAC1 to promote 'Lys-9' dimethylation of H3 (H3K9Me2) and repress expression of target genes. Interacts directly with EHMT2. Component of the GFI1-AJUBA-HDAC1 repressor complex. Interacts directly with AJUBA (via ITS LIM domains); the interaction results in the HDAC-dependent corepression of a subset of GFI1 target genes and, occurs independent of the SNAG domain. Interacts with SPI1; the interaction inhibits SPI1 transcriptional activity targeted at macrophage-specific genes, repressing macrophage differentiation of myeloid progenitor cells and promoting granulocyte commitment. Interacts with RUNX1T1; the interaction represses HDAC-mediated transcriptional activity. Interacts with RELA; the interaction occurs on liposaccharide (LPS) stimulation controls RELA DNA binding activity and regulates endotoxin-mediated TOLL-like receptor inflammatory response. Interacts (via the C-terminal zinc fingers) with ZBTB17; the interaction results in the recruitment of GFI1 to the CDKN1A/p21 promoter and repression of CDKN1A/p21 transcription. Ubiquitinated. Restricted to lymphoid tissues and testes in adult animals.

The protein localises to the nucleus. Transcription repressor essential for hematopoiesis. Functions in a cell-context and development-specific manner. Binds to 5'-TAAATCAC[AT]GCA-3' in the promoter region of a large number of genes. Component of several complexes, including the EHMT2-GFI1-HDAC1, AJUBA-GFI1-HDAC1 and RCOR-GFI-KDM1A-HDAC complexes, that suppress, via histone deacetylase (HDAC) recruitment, a number of genes implicated in multilineage blood cell development. Regulates neutrophil differentiation, promotes proliferation of lymphoid cells, and is required for granulocyte development. Inhibits SPI1 transcriptional activity at macrophage-specific genes, repressing macrophage differentiation of myeloid progenitor cells and promoting granulocyte commitment. Mediates, together with U2AF1L4, the alternative splicing of CD45 and controls T-cell receptor signaling. Regulates the endotoxin-mediated Toll-like receptor (TLR) inflammatory response by antagonizing RELA. Cooperates with CBFA2T2 to regulate ITGB1-dependent neurite growth. Controls cell-cycle progression by repressing CDKNIA/p21 transcription in response to TGFB1 via recruitment of GFI1 by ZBTB17 to the CDKNIA/p21 and CDKNIB promoters. Required for the maintenance of inner ear hair cells. In addition to its role in transcription, acts as a substrate adapter for PRMT1 in the DNA damage response: facilitates the recognition of TP53BP1 and MRE11 substrates by PRMT1, promoting their methylation and the DNA damage response. The sequence is that of Zinc finger protein Gfi-1 (Gfi1) from Rattus norvegicus (Rat).